Reading from the N-terminus, the 483-residue chain is Phloretin 2'-O-glucosyltransferase (483 aa).

Residue His-15 is the Proton acceptor of the active site. His-15 contributes to the an anthocyanidin binding site. The active-site Charge relay is Asp-118. The UDP-alpha-D-glucose site is built by Thr-140, Ala-360, Gln-362, His-377, Trp-380, Asn-381, Ser-382, and Glu-385. Ala-400 lines the an anthocyanidin pocket. UDP-alpha-D-glucose contacts are provided by Glu-401 and Gln-402.

Belongs to the UDP-glycosyltransferase family. Highly expressed in roots and at lower levels in leaves, flowers and fruits.

The catalysed reaction is phloretin + UDP-alpha-D-glucose = phlorizin + UDP + H(+). In terms of biological role, glycosyltransferase that possesses phloretin 2'-O-glycosyltransferase activity. Converts phloretin to phlorizin (phloretin 2'-O-glucoside), a potent antioxidant. Is specific for phloretin and does not possess glycosyltransferase activity toward caffeic acid, catechin, chlorogenic acid, 2-coumaric acid, 3-coumaric acid, 4-coumaric acid, cyanidin, 3,4-dihydroxyhydrocinnamic acid, epicatechin, 3-hydroxybenzoic acid, naringenin, 3,4-dihydroxybenzoic acid, quercetin and rutin. Can glycosylate phloretin in the presence of UDP-glucose, UDP-xylose and UDP-galactose. The polypeptide is Phloretin 2'-O-glucosyltransferase (Malus domestica (Apple)).